Consider the following 174-residue polypeptide: MTTIVVLICASALFVQLAFSQCLGRDPVIGFGGAYGSGWGGYDAISPYDGLGYGVPYSAGFIGLSPSNLAASCGGALAVNSLSPTTPTGLTVASENTIEGNLGIFGQLPFLGAVATDGAFSTGGIGAVLYGCGDGAIGIVSEAPIVAPASIGYGQWPVNAGYKGIGPCGCGGLY.

The first 20 residues, 1–20, serve as a signal peptide directing secretion; that stretch reads MTTIVVLICASALFVQLAFS. The interval 21–71 is left arm; sequence QCLGRDPVIGFGGAYGSGWGGYDAISPYDGLGYGVPYSAGFIGLSPSNLAA. The tract at residues 72 to 142 is central domain; that stretch reads SCGGALAVNS…GDGAIGIVSE (71 aa). Residues 143-174 are right arm; the sequence is APIVAPASIGYGQWPVNAGYKGIGPCGCGGLY.

It belongs to the chorion protein family.

Its function is as follows. This protein is one of many from the eggshell of the silk moth. In Bombyx mori (Silk moth), this protein is Chorion class CB protein M5H4.